Reading from the N-terminus, the 470-residue chain is MTELPDNTRWQLWIVALGFFMQSLDTTIVNTALPSMAKSLGESPLHMHMVVVSYVLTVAVMLPASGWLADKIGVRNIFFAAIVLFTLGSLFCALSGTLNQLVLARVLQGVGGAMMVPVGRLTVMKIVPRAQYMAAMTFVTLPGQIGPLLGPALGGVLVEYASWHWIFLINIPVGIVGAMATFMLMPNYTIETRRFDLPGFLLLAIGMAVLTLALDGSKSMGISPWTLAGLAAGGAAAILLYLLHAKKNSGALFSLRLFCTPTFSLGLLGSFAGRIGSGMLPFMTPVFLQIGLGFSPFHAGLMMIPMVLGSMGMKRIVVQIVNRFGYRRVLVATTLGLALVSLLFMSVALLGWYYLLPLVLLLQGMVNSARFSSMNTLTLKDLPDTLASSGNSLLSMIMQLSMSIGVTIAGMLLGMFGQQHIGIDSSATHHVFMYTWLCMAVIIALPAIIFARVPNDTQQNMVISRRKRSL.

The Periplasmic segment spans residues 1–11 (MTELPDNTRWQ). Residues 12–32 (LWIVALGFFMQSLDTTIVNTA) traverse the membrane as a helical segment. Residues 33-48 (LPSMAKSLGESPLHMH) are Cytoplasmic-facing. A helical transmembrane segment spans residues 49–69 (MVVVSYVLTVAVMLPASGWLA). Over 70 to 76 (DKIGVRN) the chain is Periplasmic. The chain crosses the membrane as a helical span at residues 77–97 (IFFAAIVLFTLGSLFCALSGT). The Cytoplasmic portion of the chain corresponds to 98-101 (LNQL). The helical transmembrane segment at 102–124 (VLARVLQGVGGAMMVPVGRLTVM) threads the bilayer. The Periplasmic portion of the chain corresponds to 125-137 (KIVPRAQYMAAMT). A helical membrane pass occupies residues 138 to 158 (FVTLPGQIGPLLGPALGGVLV). Residues 159 to 164 (EYASWH) are Cytoplasmic-facing. A helical membrane pass occupies residues 165-185 (WIFLINIPVGIVGAMATFMLM). Residues 186 to 196 (PNYTIETRRFD) are Periplasmic-facing. A helical membrane pass occupies residues 197-217 (LPGFLLLAIGMAVLTLALDGS). Residues 218 to 221 (KSMG) lie on the Cytoplasmic side of the membrane. A helical transmembrane segment spans residues 222 to 242 (ISPWTLAGLAAGGAAAILLYL). Topologically, residues 243-262 (LHAKKNSGALFSLRLFCTPT) are periplasmic. Residues 263–283 (FSLGLLGSFAGRIGSGMLPFM) traverse the membrane as a helical segment. The Cytoplasmic segment spans residues 284-285 (TP). Residues 286-306 (VFLQIGLGFSPFHAGLMMIPM) form a helical membrane-spanning segment. The Periplasmic segment spans residues 307-341 (VLGSMGMKRIVVQIVNRFGYRRVLVATTLGLALVS). Residues 342–362 (LLFMSVALLGWYYLLPLVLLL) form a helical membrane-spanning segment. The Cytoplasmic segment spans residues 363–395 (QGMVNSARFSSMNTLTLKDLPDTLASSGNSLLS). A helical transmembrane segment spans residues 396–416 (MIMQLSMSIGVTIAGMLLGMF). Topologically, residues 417–430 (GQQHIGIDSSATHH) are periplasmic. A helical membrane pass occupies residues 431–451 (VFMYTWLCMAVIIALPAIIFA). The Cytoplasmic portion of the chain corresponds to 452–470 (RVPNDTQQNMVISRRKRSL).

It belongs to the major facilitator superfamily. TCR/Tet family.

It is found in the cell inner membrane. The protein is Putative multidrug resistance protein MdtD of Salmonella paratyphi B (strain ATCC BAA-1250 / SPB7).